The sequence spans 531 residues: MASPVADASRRRREKRRQLDARRSKCRIRLGGHMEQWCLLKERLGFSLHSQLAKFLLDRYTSSGCVLCAAPEPGPRKGLQYLVLLSHTHSRECGLVPGLRGPGGGEGELVWECSAGHTFSWEPSLIPAPSDVPKQAPLTHTTERAWCSEARRKQEAQGLECEQRERTQETRLSRRVDSPLEIDPPLGEDQDVEEEEEEEEEEEELLSDASPWTYSSSPDDSEPDVPRPPPSPVTHTPKEGEVSPVPATLPTPCAVLASVGSPDALTSDTEVRLELSRTPQVPAELHMTESLESPGSQAQSAPNPTWDEDTAQIGLRRIRKAAKRELMPCDFPGCGRIFSNRQYLNHHKKYQHIHQKSFCCPEPACGKSFNFKKHLKEHVKLHSDTRDYICEFCARSFRTSSNLVIHRRIHTGEKPLQCEICGFTCRQKASLNWHRRKHAETAAALRFPCEFCGKRFEKPDSVVAHCSKSHPALLPAQEPPGSLVSSPSISAPESLQSPEGASISTTSDSNPASSTSISSPGVPDPRNREKS.

Residues 155–178 are compositionally biased toward basic and acidic residues; it reads EAQGLECEQRERTQETRLSRRVDS. Disordered stretches follow at residues 155–249 and 287–307; these read EAQG…PATL and MTES…PTWD. The segment covering 186 to 206 has biased composition (acidic residues); the sequence is LGEDQDVEEEEEEEEEEEELL. Ser-231 bears the Phosphoserine mark. Positions 290–303 are enriched in polar residues; that stretch reads SLESPGSQAQSAPN. 5 consecutive C2H2-type zinc fingers follow at residues 327–352, 358–382, 388–410, 416–438, and 447–470; these read MPCD…KYQH, FCCP…VKLH, YICE…RRIH, LQCE…RRKH, and FPCE…SKSH. Ser-469 carries the post-translational modification Phosphoserine. Residues 474–531 form a disordered region; that stretch reads LPAQEPPGSLVSSPSISAPESLQSPEGASISTTSDSNPASSTSISSPGVPDPRNREKS. Residues 483 to 499 show a composition bias toward polar residues; that stretch reads LVSSPSISAPESLQSPE. Over residues 502–520 the composition is skewed to low complexity; it reads SISTTSDSNPASSTSISSP.

This sequence belongs to the krueppel C2H2-type zinc-finger protein family. Post-translationally, phosphorylation at Ser-469 results in loss of DNA-binding activity.

Its subcellular location is the nucleus. Its function is as follows. May act as an transcriptional repressor for PCK1 gene expression, in turn may participate in the hepatic gluconeogenesis regulation through the activated AMPK signaling pathway. The polypeptide is Zinc finger protein 692 (Mus musculus (Mouse)).